The following is a 440-amino-acid chain: tRNA(Ile)-lysidine synthase (440 aa).

Position 31–36 (31–36) interacts with ATP; that stretch reads SGGADS.

It belongs to the tRNA(Ile)-lysidine synthase family.

It is found in the cytoplasm. It catalyses the reaction cytidine(34) in tRNA(Ile2) + L-lysine + ATP = lysidine(34) in tRNA(Ile2) + AMP + diphosphate + H(+). In terms of biological role, ligates lysine onto the cytidine present at position 34 of the AUA codon-specific tRNA(Ile) that contains the anticodon CAU, in an ATP-dependent manner. Cytidine is converted to lysidine, thus changing the amino acid specificity of the tRNA from methionine to isoleucine. This Borreliella burgdorferi (strain ATCC 35210 / DSM 4680 / CIP 102532 / B31) (Borrelia burgdorferi) protein is tRNA(Ile)-lysidine synthase.